The sequence spans 616 residues: Dihydroxy-acid dehydratase (616 aa).

Residue Asp81 participates in Mg(2+) binding. Cys122 provides a ligand contact to [2Fe-2S] cluster. Mg(2+) is bound by residues Asp123 and Lys124. The residue at position 124 (Lys124) is an N6-carboxylysine. [2Fe-2S] cluster is bound at residue Cys195. Glu491 lines the Mg(2+) pocket. Ser517 serves as the catalytic Proton acceptor.

It belongs to the IlvD/Edd family. As to quaternary structure, homodimer. [2Fe-2S] cluster serves as cofactor. The cofactor is Mg(2+).

The enzyme catalyses (2R)-2,3-dihydroxy-3-methylbutanoate = 3-methyl-2-oxobutanoate + H2O. The catalysed reaction is (2R,3R)-2,3-dihydroxy-3-methylpentanoate = (S)-3-methyl-2-oxopentanoate + H2O. It functions in the pathway amino-acid biosynthesis; L-isoleucine biosynthesis; L-isoleucine from 2-oxobutanoate: step 3/4. It participates in amino-acid biosynthesis; L-valine biosynthesis; L-valine from pyruvate: step 3/4. Functions in the biosynthesis of branched-chain amino acids. Catalyzes the dehydration of (2R,3R)-2,3-dihydroxy-3-methylpentanoate (2,3-dihydroxy-3-methylvalerate) into 2-oxo-3-methylpentanoate (2-oxo-3-methylvalerate) and of (2R)-2,3-dihydroxy-3-methylbutanoate (2,3-dihydroxyisovalerate) into 2-oxo-3-methylbutanoate (2-oxoisovalerate), the penultimate precursor to L-isoleucine and L-valine, respectively. In Escherichia coli (strain SMS-3-5 / SECEC), this protein is Dihydroxy-acid dehydratase.